The primary structure comprises 353 residues: Rhodopsin (353 aa).

Topologically, residues 1–36 (MNGTEGPYFYIPMVNTTGIVRSPYEYPQYYLVNPAA) are extracellular. N-linked (GlcNAc...) asparagine glycosylation is found at N2 and N15. The helical transmembrane segment at 37–61 (YAALGAYMFLLILIGFPVNFLTLYV) threads the bilayer. Residues 62–73 (TIEHKKLRTPLN) are Cytoplasmic-facing. Residues 74–96 (YILLNLAVADLFMVFGGFTTTMY) form a helical membrane-spanning segment. Over 97–110 (TSMHGYFVLGRLGC) the chain is Extracellular. Residues C110 and C187 are joined by a disulfide bond. Residues 111-133 (NLEGFFATLGGEIALWSLVVLAV) form a helical membrane-spanning segment. Residues 134–136 (ERW) carry the 'Ionic lock' involved in activated form stabilization motif. The Cytoplasmic portion of the chain corresponds to 134–152 (ERWMVVCKPISNFRFGEDH). Residues 153–173 (AIMGLAFTWVMAAACAVPPLV) form a helical membrane-spanning segment. Topologically, residues 174 to 202 (GWSRYIPEGMQCSCGIDYYTRAEGFNNES) are extracellular. N-linked (GlcNAc...) asparagine glycosylation occurs at N200. A helical membrane pass occupies residues 203–224 (FVIYMFVCHFLIPLVVVFFCYG). Topologically, residues 225-252 (RLLCAVKEAAAAQQESETTQRAEREVSR) are cytoplasmic. The chain crosses the membrane as a helical span at residues 253-274 (MVVIMVVAFLVCWCPYAGVAWY). Residues 275–286 (IFTHQGSEFGPL) lie on the Extracellular side of the membrane. A helical transmembrane segment spans residues 287 to 308 (FMTFPAFFAKSSSIYNPMIYIC). Residue K296 is modified to N6-(retinylidene)lysine. Residues 309-353 (MNKQFRQCMITTLCCGKNPFEEEEGASTTSKTEASSVSSSSVSPA) lie on the Cytoplasmic side of the membrane. S-palmitoyl cysteine attachment occurs at residues C322 and C323. The tract at residues 329 to 353 (EEEEGASTTSKTEASSVSSSSVSPA) is disordered. Over residues 334–353 (ASTTSKTEASSVSSSSVSPA) the composition is skewed to low complexity.

It belongs to the G-protein coupled receptor 1 family. Opsin subfamily. Phosphorylated on some or all of the serine and threonine residues present in the C-terminal region. Post-translationally, contains one covalently linked retinal chromophore.

The protein localises to the membrane. The protein resides in the cell projection. Its subcellular location is the cilium. It is found in the photoreceptor outer segment. In terms of biological role, photoreceptor required for image-forming vision at low light intensity. While most salt water fish species use retinal as chromophore, most freshwater fish use 3-dehydroretinal, or a mixture of retinal and 3-dehydroretinal. Light-induced isomerization of 11-cis to all-trans retinal triggers a conformational change that activates signaling via G-proteins. Subsequent receptor phosphorylation mediates displacement of the bound G-protein alpha subunit by arrestin and terminates signaling. The polypeptide is Rhodopsin (rho) (Chelon auratus (Golden grey mullet)).